A 413-amino-acid chain; its full sequence is uncharacterized protein (413 aa).

Residues 1–20 (MRVIIVIMMVVFVVVGTSSG) form the signal peptide.

This is an uncharacterized protein from Archaeoglobus fulgidus (strain ATCC 49558 / DSM 4304 / JCM 9628 / NBRC 100126 / VC-16).